A 359-amino-acid polypeptide reads, in one-letter code: 3-dehydroquinate synthase (359 aa).

Residues 71–76 (DGEQFK), 105–109 (GVIGD), 129–130 (TT), K142, K151, and 169–172 (CLQT) each bind NAD(+). Zn(2+)-binding residues include E184, H247, and H264.

It belongs to the sugar phosphate cyclases superfamily. Dehydroquinate synthase family. The cofactor is Co(2+). Zn(2+) is required as a cofactor. NAD(+) serves as cofactor.

It is found in the cytoplasm. It catalyses the reaction 7-phospho-2-dehydro-3-deoxy-D-arabino-heptonate = 3-dehydroquinate + phosphate. It participates in metabolic intermediate biosynthesis; chorismate biosynthesis; chorismate from D-erythrose 4-phosphate and phosphoenolpyruvate: step 2/7. Its function is as follows. Catalyzes the conversion of 3-deoxy-D-arabino-heptulosonate 7-phosphate (DAHP) to dehydroquinate (DHQ). In Shewanella sp. (strain ANA-3), this protein is 3-dehydroquinate synthase.